A 266-amino-acid polypeptide reads, in one-letter code: NADP-dependent mannitol dehydrogenase (266 aa).

2 residues coordinate NADP(+): Asn107 and Lys140. Ser159 acts as the Proton donor in catalysis. Residues Tyr174, Lys178, Ile206, and Thr208 each coordinate NADP(+). Tyr174 serves as the catalytic Proton acceptor. Lys178 functions as the Lowers pKa of active site Tyr in the catalytic mechanism.

Belongs to the short-chain dehydrogenases/reductases (SDR) family. As to quaternary structure, homotetramer.

It catalyses the reaction D-mannitol + NADP(+) = D-fructose + NADPH + H(+). Functionally, catalyzes the interconversion between D-mannitol and D-fructose. Plays a key role in liamocins biosynthesis by providing the mannitol moity that is linked to 3,5-dihydroxydecanoic acid (provided by the HR-PKS PKS1) via ester bond formation catalyzed by the esterase EST1. This is NADP-dependent mannitol dehydrogenase from Aureobasidium melanogenum (Aureobasidium pullulans var. melanogenum).